A 1705-amino-acid polypeptide reads, in one-letter code: Receptor-type tyrosine-protein phosphatase V (1705 aa).

The first 18 residues, 1-18, serve as a signal peptide directing secretion; that stretch reads MRPLILLAALLWLQDSLA. Residues 19–1077 are Extracellular-facing; sequence QEDVCSSLDG…QASISLVAMP (1059 aa). Residues 24-44 form a disordered region; sequence SSLDGSPDRQGGGPPLSVSVT. Fibronectin type-III domains are found at residues 37–129, 130–222, 218–305, 306–388, 393–454, 475–569, 565–654, 655–749, 744–831, and 832–926; these read PPLS…TAPT, VVRG…VPPD, PVPP…EWTY, PSYP…SIWL, ARPM…HYRV, PPQS…APPT, PAPP…TGWT, PPSA…TPNE, PLTP…VLSV, and EPGP…SAEV. 15 N-linked (GlcNAc...) asparagine glycosylation sites follow: N74, N89, N117, N174, N239, N259, N299, N345, N431, N551, N570, N620, N649, N663, and N737. N851, N882, N970, and N982 each carry an N-linked (GlcNAc...) asparagine glycan. A helical transmembrane segment spans residues 1078 to 1100; sequence LTVMMGTVVGCIIIVCAVLCLLC. The Cytoplasmic portion of the chain corresponds to 1101–1705; it reads RRGLKGPRSE…LRNRLPRARK (605 aa). 2 Tyrosine-protein phosphatase domains span residues 1150–1409 and 1427–1695; these read FFQE…LLNK and NFAQ…LNSA. Substrate contacts are provided by residues D1316, 1350–1356, and Q1394; that span reads CSAGVGR. C1350 (phosphocysteine intermediate) is an active-site residue.

Belongs to the protein-tyrosine phosphatase family. Receptor class 3 subfamily.

It is found in the membrane. The enzyme catalyses O-phospho-L-tyrosyl-[protein] + H2O = L-tyrosyl-[protein] + phosphate. In terms of biological role, protein tyrosine phosphatase that acts as a regulator of energy metabolism by mediating dephosphorylation of insulin receptor (Insr). Prevents decarboxylation of osteocalcin (Bglap and Bglap2) via an indirect mechanism: dephosphorylation of insulin receptor prevents insulin signaling-dependent decarboxylation of osteocalcin, preventing the hormone activity of osteocalcin. May play a role in the maintenance of pluripotency. The protein is Receptor-type tyrosine-protein phosphatase V (Ptprv) of Mus musculus (Mouse).